Reading from the N-terminus, the 344-residue chain is Sulfate/thiosulfate import ATP-binding protein CysA (344 aa).

The ABC transporter domain occupies 3 to 237; that stretch reads IEVRNLVKKF…PATAFVHGFI (235 aa). Position 35 to 42 (35 to 42) interacts with ATP; it reads GPSGSGKT.

The protein belongs to the ABC transporter superfamily. Sulfate/tungstate importer (TC 3.A.1.6) family. The complex is composed of two ATP-binding proteins (CysA), two transmembrane proteins (CysT and CysW) and a solute-binding protein (CysP).

It localises to the cell inner membrane. It catalyses the reaction sulfate(out) + ATP + H2O = sulfate(in) + ADP + phosphate + H(+). It carries out the reaction thiosulfate(out) + ATP + H2O = thiosulfate(in) + ADP + phosphate + H(+). In terms of biological role, part of the ABC transporter complex CysAWTP involved in sulfate/thiosulfate import. Responsible for energy coupling to the transport system. The polypeptide is Sulfate/thiosulfate import ATP-binding protein CysA (Bradyrhizobium diazoefficiens (strain JCM 10833 / BCRC 13528 / IAM 13628 / NBRC 14792 / USDA 110)).